The primary structure comprises 310 residues: p-hydroxybenzoic acid efflux pump subunit AaeA (310 aa).

The chain crosses the membrane as a helical span at residues 12 to 32 (AITVVLVILAFIAIFNAWVYY).

Belongs to the membrane fusion protein (MFP) (TC 8.A.1) family.

Its subcellular location is the cell inner membrane. In terms of biological role, forms an efflux pump with AaeB. The polypeptide is p-hydroxybenzoic acid efflux pump subunit AaeA (Escherichia coli O8 (strain IAI1)).